A 571-amino-acid chain; its full sequence is Glutamine--tRNA ligase (571 aa).

The 'HIGH' region signature appears at P35–H45. ATP is bound by residues E36–N38 and H42–S48. L-glutamine-binding residues include D68 and Y213. ATP-binding positions include T232, R262–L263, and L270–K272. A 'KMSKS' region motif is present at residues I269–R273.

Belongs to the class-I aminoacyl-tRNA synthetase family. As to quaternary structure, monomer.

It is found in the cytoplasm. The catalysed reaction is tRNA(Gln) + L-glutamine + ATP = L-glutaminyl-tRNA(Gln) + AMP + diphosphate. This chain is Glutamine--tRNA ligase, found in Buchnera aphidicola subsp. Acyrthosiphon pisum (strain Tuc7).